The sequence spans 115 residues: uncharacterized protein (115 aa).

The MSP domain maps to 1–115; the sequence is MGVEISLDPP…ETVIKLSAAE (115 aa).

This is an uncharacterized protein from Caenorhabditis elegans.